We begin with the raw amino-acid sequence, 551 residues long: MLARPETDTSVDYYAILKLQKNATFQQIRKQYLFLALQYHPDRNPGDEERAVKRFQRLQLAHEVLSDATKRLIYDQLFGLSTRTRSQYKPNSTSNPSKHTSAYASYNKGKNSKWSSPFASTTKKPQESSEKYSKKSSTRKKEHFNKKPSFPRDTEYSHIYNMKYDPRSGIGIRVKRQEPESLKKENNNSDYLPKSAMKQKKGGPKDSSKHPSNDGKIPESKPSVYKSRASNLFSSNEQSIHSSFGSKFHFDKSSNPFSFEFSPSSNAAKPSNSEECNIPKFNSSFKTSNDFFTFTKTEESSPYSFSFKLEDSNTPKFKSSSKPVKSSFVFTKPEAESSNPFSFDFGSSGPKSRSDTRNNIRTPLWTSSVFEKPESDLPNKTAFGFMRSNTSTFNQKCDDFSSASFMKEKTEFEEQLQEDNDHSLGDLFSKINISTESPSVAMPSIPVIQPPSFPIFSSIDFNVRNREYWNQLMVFQKLYSKYCTESQHFINSWINIKKELHIVPVNWEIFEKVEKSWDQCEEFVAEFRQTEEKYFLFLKRLRELINKNQML.

Residues 12-78 form the J domain; it reads DYYAILKLQK…TKRLIYDQLF (67 aa). Polar residues predominate over residues 85–122; that stretch reads RSQYKPNSTSNPSKHTSAYASYNKGKNSKWSSPFASTT. 3 disordered regions span residues 85–153, 176–226, and 334–359; these read RSQY…FPRD, RQEP…SVYK, and EAES…TRNN. Residues 124-133 are compositionally biased toward basic and acidic residues; sequence KPQESSEKYS. Over residues 134-146 the composition is skewed to basic residues; the sequence is KKSSTRKKEHFNK. Composition is skewed to basic and acidic residues over residues 176–187 and 203–219; these read RQEPESLKKENN and GPKD…KIPE.

The protein resides in the cytoplasm. Its subcellular location is the cytoskeleton. In terms of biological role, has a role in sporulation. The polypeptide is Meiotically up-regulated gene 184 protein (mug184) (Schizosaccharomyces pombe (strain 972 / ATCC 24843) (Fission yeast)).